We begin with the raw amino-acid sequence, 121 residues long: Small ribosomal subunit protein uS13 (121 aa).

Residues 92–121 (RRGLPVRGQKTKNNSRTRKGPRKTMANKKK) form a disordered region.

It belongs to the universal ribosomal protein uS13 family. In terms of assembly, part of the 30S ribosomal subunit. Forms a loose heterodimer with protein S19. Forms two bridges to the 50S subunit in the 70S ribosome.

In terms of biological role, located at the top of the head of the 30S subunit, it contacts several helices of the 16S rRNA. In the 70S ribosome it contacts the 23S rRNA (bridge B1a) and protein L5 of the 50S subunit (bridge B1b), connecting the 2 subunits; these bridges are implicated in subunit movement. Contacts the tRNAs in the A and P-sites. The sequence is that of Small ribosomal subunit protein uS13 from Oceanobacillus iheyensis (strain DSM 14371 / CIP 107618 / JCM 11309 / KCTC 3954 / HTE831).